Reading from the N-terminus, the 333-residue chain is Salivary glue protein Sgs-3 (333 aa).

Positions 1–23 (MKLTIATALVGILLIACAHVANG) are cleaved as a signal peptide. Residues 51–285 (TCRPPTTTRC…ATARPTSKPC (235 aa)) form a disordered region. The segment covering 60–73 (CPPPTTTRCPPPTR) has biased composition (pro residues). The span at 74–88 (PAECTATTKRPTARP) shows a compositional bias: low complexity. A compositionally biased stretch (basic residues) spans 89-277 (TTKRATTRRT…TKRATTKRAT (189 aa)).

This Drosophila erecta (Fruit fly) protein is Salivary glue protein Sgs-3 (Sgs3).